The primary structure comprises 491 residues: MKLHELTLMEVKRGLEQGDFSSEELVTSVYDRIEETEDHIKAYITLTKEQALAQSKEIDSQRAKGEELGPLAGIPVAIKDNICTKDVTTSCASKILEDFVPPYNATVISKLAEAGAIIVGKTNMDEFAMGSSTENSAFFVTSNPWDTERVPGGSSGGSAASVASAQVPLALGSDTGGSIRQPASFCGVVGMKPTYGRVSRYGLVAFASSLDQIGPLSKNVEDTALALDIISGHDHMDSTSVDLEVPNHTDFLNQDIDELTIGIPKEYYELVDNDVKSLVESSLQSIEPEAGNYRQVSLPTTEHALSAYYLIAPAEASSNLARFDGVRYGQRFATDDLKTMYNQTRKEGFGNEVKQRVMLGTYALSAGYYDALYLKALKVRSLIKQEFEQVFSECDVLIAPTTPTVPFREGENVDDPLTMYKNDICTAPVNLAGLPSISIPCGFSNGLPVGLQVIGKAFDEGKVIQVAHKIEQMLQVFKNAPQQGLDNQGGK.

Catalysis depends on charge relay system residues Lys79 and Ser154. The active-site Acyl-ester intermediate is Ser178.

It belongs to the amidase family. GatA subfamily. Heterotrimer of A, B and C subunits.

It carries out the reaction L-glutamyl-tRNA(Gln) + L-glutamine + ATP + H2O = L-glutaminyl-tRNA(Gln) + L-glutamate + ADP + phosphate + H(+). Its function is as follows. Allows the formation of correctly charged Gln-tRNA(Gln) through the transamidation of misacylated Glu-tRNA(Gln) in organisms which lack glutaminyl-tRNA synthetase. The reaction takes place in the presence of glutamine and ATP through an activated gamma-phospho-Glu-tRNA(Gln). This is Glutamyl-tRNA(Gln) amidotransferase subunit A from Natranaerobius thermophilus (strain ATCC BAA-1301 / DSM 18059 / JW/NM-WN-LF).